Consider the following 187-residue polypeptide: Photosystem I assembly protein Ycf4 (187 aa).

The next 2 membrane-spanning stretches (helical) occupy residues 23–43 (INYFWSFSIFFGAFGFLIVGI) and 70–90 (FYGIAGIFLSFYLWFTMILGV).

The protein belongs to the Ycf4 family.

Its subcellular location is the plastid. It is found in the chloroplast thylakoid membrane. Its function is as follows. Seems to be required for the assembly of the photosystem I complex. The protein is Photosystem I assembly protein Ycf4 of Chara vulgaris (Common stonewort).